A 1379-amino-acid polypeptide reads, in one-letter code: ABC multidrug transporter MDR2 (1379 aa).

A helical transmembrane segment spans residues 65-85 (IALIVIGTIAGIGAGIPFPLL). The region spanning 69 to 367 (VIGTIAGIGA…MAPFMHIFAS (299 aa)) is the ABC transmembrane type-1 1 domain. Asn97 carries N-linked (GlcNAc...) asparagine glycosylation. 5 helical membrane-spanning segments follow: residues 119–139 (VLQVIYVSILNFVCMYIHTGC), 193–213 (KVGLFIGTISYFVAAYIVAFL), 215–235 (VATIAAMLMSVVPIYFLMAFG), 301–321 (IQFGMLYFVAYASNALAFWQG), and 336–356 (VSVGAVYTVIFVLLDASFVLS). The 280-residue stretch at 403 to 682 (IELQDVTFNY…DGVYAGMVRL (280 aa)) folds into the ABC transporter 1 domain. 438-445 (GTSGSGKS) contacts ATP. N-linked (GlcNAc...) asparagine glycans are attached at residues Asn552 and Asn633. Residues 738-758 (YMPEEADSLPTEPENEKEKPK) form a disordered region. Transmembrane regions (helical) follow at residues 781–801 (LGLITSIMIGVSYTGEAVIFG), 820–840 (GMLFGLLFFILAIVKFAAVIV), 881–901 (LLVALVTSDASALSSLTGTTI), and 920–942 (VIAWKIAVVLLATLPVLLASGVL). One can recognise an ABC transmembrane type-1 2 domain in the interval 781 to 1068 (LGLITSIMIG…MFALVPDISK (288 aa)). Asn989 carries an N-linked (GlcNAc...) asparagine glycan. The next 2 helical transmembrane spans lie at 1008 to 1028 (FWLSLAYSISTLVYALAYWWG) and 1032 to 1052 (ILAGMYTQVQFFIVLPALLFS). The 240-residue stretch at 1135–1374 (VQFRNVHFRY…CESYRANVIH (240 aa)) folds into the ABC transporter 2 domain. 1170-1177 (GPSGSGKS) contributes to the ATP binding site.

This sequence belongs to the ABC transporter superfamily. ABCB family. Multidrug resistance exporter (TC 3.A.1.201) subfamily.

The protein localises to the cell membrane. Functionally, pleiotropic ABC efflux transporter that may be involved in the modulation susceptibility to a wide range of unrelated cytotoxic compounds. This is ABC multidrug transporter MDR2 from Trichophyton interdigitale (strain MR816).